The primary structure comprises 369 residues: 4-hydroxyproline betaine 2-epimerase (369 aa).

Substrate-binding residues include Tyr56 and Gln162. The active-site Proton donor/acceptor is Lys164. Mg(2+) is bound by residues Asp194, Glu219, and Asp242. Lys266 serves as the catalytic Proton donor/acceptor. Position 295 (Ala295) interacts with substrate.

Belongs to the mandelate racemase/muconate lactonizing enzyme family. Mg(2+) serves as cofactor.

The catalysed reaction is trans-4-hydroxy-L-proline betaine = cis-4-hydroxy-D-proline betaine. The enzyme catalyses L-proline betaine = D-proline betaine. In terms of biological role, catalyzes the 2-epimerization of trans-4-hydroxy-L-proline betaine (tHyp-B) to cis-4-hydroxy-D-proline betaine (cHyp-B). Is involved in a catabolic pathway that degrades tHyp-B to alpha-ketoglutarate. This pathway would permit the utilization of tHyp-B as a carbon and nitrogen source in the absence of osmotic stress, since tHyp-B functions as an osmolyte and is not catabolized when it is needed as osmoprotectant. Can also catalyze the racemization of L-proline betaine. In Paracoccus denitrificans (strain Pd 1222), this protein is 4-hydroxyproline betaine 2-epimerase (hpbD).